The following is a 318-amino-acid chain: uncharacterized protein (318 aa).

This is an uncharacterized protein from Autographa californica nuclear polyhedrosis virus (AcMNPV).